The chain runs to 554 residues: GPI alpha-1,2-mannosyltransferase 3 (554 aa).

The N-linked (GlcNAc...) asparagine glycan is linked to Asn-26. Helical transmembrane passes span Leu-63–Val-83, Val-136–Val-156, Leu-192–Gly-212, Leu-224–Phe-244, Asp-255–Ile-275, Gly-315–Pro-335, Ile-340–Phe-360, Phe-362–Lys-382, and Pro-387–His-407. An N-linked (GlcNAc...) asparagine glycan is attached at Asn-427.

Belongs to the glycosyltransferase 22 family. PIGB subfamily.

Its subcellular location is the endoplasmic reticulum membrane. Its pathway is glycolipid biosynthesis; glycosylphosphatidylinositol-anchor biosynthesis. Functionally, alpha-1,2-mannosyltransferase that catalyzes the transfer of the third mannose, via an alpha-1,2 bond, from a dolichol-phosphate-mannose (Dol-P-Man) to an alpha-D-Man-(1-&gt;6)-2-PEtn-alpha-D-Man-(1-&gt;4)-alpha-D-GlcN-(1-&gt;6)-(1-radyl,2-acyl-sn-glycero-3-phospho)-2-acyl-inositol intermediate to generate an alpha-D-Man-(1-&gt;2)-alpha-D-Man-(1-&gt;6)-2-PEtn-alpha-D-Man-(1-&gt;4)-alpha-D-GlcN-(1-&gt;6)-(1-radyl,2-acyl-sn-glycero-3-phospho)-2-acyl-inositol (also termed H6) and participates in the nineth step of the glycosylphosphatidylinositol-anchor biosynthesis. May also add the third mannose to an alpha-D-Man-(1-&gt;6)-alpha-D-Man-(1-&gt;4)-alpha-D-GlcN-(1-&gt;6)-(1-radyl,2-acyl-sn-glycero-3-phospho)-2-acyl-inositol (also termed H3) intermediate generating an alpha-D-Man-(1-&gt;2)-alpha-D-Man-(1-&gt;6)-alpha-D-Man-(1-&gt;4)-alpha-D-GlcN-(1-&gt;6)-(1-radyl,2-acyl-sn-glycero-3-phospho)-2-acyl-inositol (also termed H4). This is GPI alpha-1,2-mannosyltransferase 3 from Homo sapiens (Human).